A 90-amino-acid polypeptide reads, in one-letter code: UPF0184 protein (90 aa).

Residues 16–78 (DETKEEMVEL…QSLETEQNTE (63 aa)) adopt a coiled-coil conformation. Residues 57 to 90 (SQQARQELQAERQSLETEQNTEPSTKSDQEQKKQ) form a disordered region. Residues 81-90 (TKSDQEQKKQ) show a composition bias toward basic and acidic residues.

This sequence belongs to the UPF0184 (EST00098) family.

The polypeptide is UPF0184 protein (Branchiostoma floridae (Florida lancelet)).